A 332-amino-acid polypeptide reads, in one-letter code: MQFKHFKLATLAAALAFSANSFADITVYNGQHKEAATAVAKAFEQETGIKVTLNSGKSEQLAGQLKEEGDKTPADVFYTEQTATFADLSEAGLLAPISEQTIQQTAQKGVPLAPKKDWIALSGRSRVVVYDHTKLSEKDMEKSVLDYATPKWKGKIGYVSTSGAFLEQVVALSKMKGDKVALNWLKGLKENGKLYAKNSVALQAVENGEVPAALINNYYWYNLAKEKGVENLKSRLYFVRHQDPGALVSYSGAAVLKASKNQAEAQKFVDFLASKKGQEALVAARAEYPLRADVVSPFNLEPYEKLEAPVVSATTAQDKEHAIKLIEEAGLK.

The first 23 residues, 1–23 (MQFKHFKLATLAAALAFSANSFA), serve as a signal peptide directing secretion. Fe cation is bound by residues H32, E80, Y218, and Y219.

This sequence belongs to the bacterial solute-binding protein 1 family. The complex is composed of two ATP-binding proteins (FbpC), two transmembrane proteins (FbpB) and a solute-binding protein (FbpA).

It localises to the periplasm. In terms of biological role, part of the ABC transporter complex FbpABC (TC 3.A.1.10.1) involved in Fe(3+) ions import. This protein specifically binds Fe(3+) and is involved in its transmembrane transport. The sequence is that of Iron-utilization periplasmic protein (fbpA) from Haemophilus influenzae (strain ATCC 51907 / DSM 11121 / KW20 / Rd).